The following is a 315-amino-acid chain: Dihydroorotate dehydrogenase (fumarate) (315 aa).

Residues K46, 70 to 74 (NSMGL), and N130 contribute to the substrate site. 46-47 (KS) contributes to the FMN binding site. An FMN-binding site is contributed by N130. Catalysis depends on C133, which acts as the Nucleophile. Residues K167 and I195 each contribute to the FMN site. Residue 196–197 (NS) coordinates substrate. Residues G224, 252-253 (GG), and 274-275 (GT) contribute to the FMN site.

Belongs to the dihydroorotate dehydrogenase family. Type 1 subfamily. In terms of assembly, homodimer. The cofactor is FMN.

The protein resides in the cytoplasm. The catalysed reaction is (S)-dihydroorotate + fumarate = orotate + succinate. Its pathway is pyrimidine metabolism; UMP biosynthesis via de novo pathway. Functionally, catalyzes the conversion of dihydroorotate to orotate with fumarate as the electron acceptor. The chain is Dihydroorotate dehydrogenase (fumarate) (URA1) from Kluyveromyces lactis (strain ATCC 8585 / CBS 2359 / DSM 70799 / NBRC 1267 / NRRL Y-1140 / WM37) (Yeast).